Consider the following 763-residue polypeptide: Ethylene receptor 2 (763 aa).

The next 3 membrane-spanning stretches (helical) occupy residues 58-78 (FLIA…ATCS), 86-106 (IVLQ…ITMF), and 115-135 (VVLA…ATAI). 2 residues coordinate Cu cation: C97 and H101. One can recognise a GAF domain in the interval 190–339 (DRHTILYTTM…VVADQVAVAL (150 aa)). The Histidine kinase domain occupies 382-615 (AMYDGMRRPM…TIMLALQFQL (234 aa)). The Response regulatory domain occupies 641 to 760 (QVILVDSDDT…ALGDELYRVL (120 aa)). The residue at position 692 (D692) is a 4-aspartylphosphate.

Belongs to the ethylene receptor family. The cofactor is Cu cation. Post-translationally, autophosphorylated on serine, threonine and tyrosine residues.

It localises to the endoplasmic reticulum membrane. It carries out the reaction ATP + protein L-histidine = ADP + protein N-phospho-L-histidine.. In terms of biological role, ethylene receptor related to bacterial two-component regulators. Acts as a negative regulator of ethylene signaling. May delay the transition from the vegetative stage to the floral stage by up-regulating GI (GIGANTEA) and RCN1 and cause starch accumulation in stems by down-regulating the alpha-amylase AMY3D. The polypeptide is Ethylene receptor 2 (Oryza sativa subsp. japonica (Rice)).